The following is a 198-amino-acid chain: V-type ATP synthase subunit E 1 (198 aa).

It belongs to the V-ATPase E subunit family.

Produces ATP from ADP in the presence of a proton gradient across the membrane. The sequence is that of V-type ATP synthase subunit E 1 from Clostridium tetani (strain Massachusetts / E88).